Here is a 211-residue protein sequence, read N- to C-terminus: Cytochrome c biogenesis ATP-binding export protein CcmA 2 (211 aa).

Residues 6–208 (LEARELGVRR…GAVLDLATDA (203 aa)) form the ABC transporter domain. 38 to 45 (GPNGAGKT) serves as a coordination point for ATP.

This sequence belongs to the ABC transporter superfamily. CcmA exporter (TC 3.A.1.107) family. The complex is composed of two ATP-binding proteins (CcmA) and two transmembrane proteins (CcmB).

Its subcellular location is the cell inner membrane. The catalysed reaction is heme b(in) + ATP + H2O = heme b(out) + ADP + phosphate + H(+). Part of the ABC transporter complex CcmAB involved in the biogenesis of c-type cytochromes; once thought to export heme, this seems not to be the case, but its exact role is uncertain. Responsible for energy coupling to the transport system. In Cupriavidus metallidurans (strain ATCC 43123 / DSM 2839 / NBRC 102507 / CH34) (Ralstonia metallidurans), this protein is Cytochrome c biogenesis ATP-binding export protein CcmA 2.